A 261-amino-acid polypeptide reads, in one-letter code: Ribosomal RNA small subunit methyltransferase J (261 aa).

S-adenosyl-L-methionine contacts are provided by residues 109–110, 125–126, and aspartate 179; these read RD and ER.

It belongs to the methyltransferase superfamily. RsmJ family.

It localises to the cytoplasm. It carries out the reaction guanosine(1516) in 16S rRNA + S-adenosyl-L-methionine = N(2)-methylguanosine(1516) in 16S rRNA + S-adenosyl-L-homocysteine + H(+). In terms of biological role, specifically methylates the guanosine in position 1516 of 16S rRNA. The protein is Ribosomal RNA small subunit methyltransferase J of Pseudomonas aeruginosa (strain ATCC 15692 / DSM 22644 / CIP 104116 / JCM 14847 / LMG 12228 / 1C / PRS 101 / PAO1).